The sequence spans 392 residues: MTLLGTALRPAATRVMLLGSGELGKEVAIECQRLGVEVIAVDRYADAPAMHVAHRSHVINMLDGDALRRVVELEKPHYIVPEIEAIATDMLIQLEEEGLNVVPCARATKLTMNREGIRRLAAEELQLPTSTYRFADSESLFREAVADIGYPCIVKPVMSSSGKGQTFIRSAEQLAQAWKYAQQGGRAGAGRVIVEGVVKFDFEITLLTVSAVDGVHFCAPVGHRQEDGDYRESWQPQQMSPLALERAQEIARKVVLALGGYGLFGVELFVCSDEVIFSEVSPRPHDTGMVTLISQDLSEFALHVRAFLGLPVGGIRQYGPAASAVILPQLTSQNVTFDNVQNAVGADLQIRLFGKPEIDGSRRLGVALATAESVVDAIERAKHAAGQVKVQG.

Residues 22–23 (EL) and Glu82 each bind N(1)-(5-phospho-beta-D-ribosyl)glycinamide. ATP is bound by residues Arg114, Lys155, 160–165 (SSGKGQ), 195–198 (EGVV), and Glu203. The ATP-grasp domain occupies 119–308 (RLAAEELQLP…EFALHVRAFL (190 aa)). Glu267 and Glu279 together coordinate Mg(2+). Residues Asp286, Lys355, and 362–363 (RR) each bind N(1)-(5-phospho-beta-D-ribosyl)glycinamide.

Belongs to the PurK/PurT family. In terms of assembly, homodimer.

It catalyses the reaction N(1)-(5-phospho-beta-D-ribosyl)glycinamide + formate + ATP = N(2)-formyl-N(1)-(5-phospho-beta-D-ribosyl)glycinamide + ADP + phosphate + H(+). The protein operates within purine metabolism; IMP biosynthesis via de novo pathway; N(2)-formyl-N(1)-(5-phospho-D-ribosyl)glycinamide from N(1)-(5-phospho-D-ribosyl)glycinamide (formate route): step 1/1. Functionally, involved in the de novo purine biosynthesis. Catalyzes the transfer of formate to 5-phospho-ribosyl-glycinamide (GAR), producing 5-phospho-ribosyl-N-formylglycinamide (FGAR). Formate is provided by PurU via hydrolysis of 10-formyl-tetrahydrofolate. The sequence is that of Formate-dependent phosphoribosylglycinamide formyltransferase from Shigella boydii serotype 18 (strain CDC 3083-94 / BS512).